The chain runs to 234 residues: Sugar fermentation stimulation protein homolog (234 aa).

Belongs to the SfsA family.

The sequence is that of Sugar fermentation stimulation protein homolog from Pseudoalteromonas atlantica (strain T6c / ATCC BAA-1087).